We begin with the raw amino-acid sequence, 192 residues long: Ras-like protein 2 (192 aa).

12 to 19 provides a ligand contact to GTP; sequence GGGGVGKS. The Effector region motif lies at 34-42; sequence YDPTIEDSY. Residue C46 is the site of S-palmitoyl cysteine attachment. GTP-binding positions include 59 to 63 and 118 to 121; these read DTAGQ and NKCD. 2 S-palmitoyl cysteine lipidation sites follow: C120 and C147. A Cysteine methyl ester modification is found at C189. A lipid anchor (S-farnesyl cysteine) is attached at C189. Positions 190–192 are cleaved as a propeptide — removed in mature form; that stretch reads CLM.

This sequence belongs to the small GTPase superfamily. Ras family. Interacts with hzg.

It is found in the cell membrane. It carries out the reaction GTP + H2O = GDP + phosphate + H(+). Alternates between an inactive form bound to GDP and an active form bound to GTP. Activated by a guanine nucleotide-exchange factor (GEF) and inactivated by a GTPase-activating protein (GAP). Its function is as follows. May be involved in endocytic processes and/or other transport pathways mediated by vesicle trafficking. May interact functionally with ROP protein. Ras proteins bind GDP/GTP and possess intrinsic GTPase activity. This chain is Ras-like protein 2 (Ras64B), found in Drosophila melanogaster (Fruit fly).